Consider the following 474-residue polypeptide: GTPase Der (474 aa).

EngA-type G domains lie at 2–166 (LRIA…NVPE) and 212–385 (LKIA…TTVS). Residues 8-15 (GRPNVGKS), 55-59 (DTGGV), 118-121 (NKAD), 218-225 (GRPNVGKS), 265-269 (DTAGL), and 330-333 (NKWD) each bind GTP. Residues 386–470 (SKVPTPVVNK…PFDLEFKEKT (85 aa)) enclose the KH-like domain.

It belongs to the TRAFAC class TrmE-Era-EngA-EngB-Septin-like GTPase superfamily. EngA (Der) GTPase family. As to quaternary structure, associates with the 50S ribosomal subunit.

Its function is as follows. GTPase that plays an essential role in the late steps of ribosome biogenesis. The sequence is that of GTPase Der from Chlamydia abortus (strain DSM 27085 / S26/3) (Chlamydophila abortus).